The chain runs to 861 residues: E3 ubiquitin-protein ligase SH3RF1 (861 aa).

The RING-type zinc-finger motif lies at 12–53 (CPVCLERLDASAKVLPCQHTFCKRCLLGIVSSRNELRCPECR). SH3 domains lie at 132–191 (PQLP…IIKP) and 194–257 (QPPP…FNSA). Residues 268 to 319 (SGVDTGEGSSGTTHSSNSQKQADAKKNTKKRHSFTSLTMSNKSSQSVQNRHS) are disordered. A compositionally biased stretch (low complexity) spans 273–285 (GEGSSGTTHSSNS). Over residues 301–317 (FTSLTMSNKSSQSVQNR) the composition is skewed to polar residues. Positions 435–496 (TRPSVFVAIY…PGNYVAPVTR (62 aa)) constitute an SH3 3 domain. The interval 684 to 731 (NSAANKQDKDSKKEKKGLLKLLSGASTKRKPRSSPPHSPTQELEQTNS) is disordered. Over residues 689-700 (KQDKDSKKEKKG) the composition is skewed to basic and acidic residues. Residues 802-861 (RPCERYRVVVSYPPQSEAELELKEGDIVFVHKKREDGWFKGTLQRNGKTGLFPGSFVENI) form the SH3 4 domain.

It belongs to the SH3RF family. In terms of processing, autoubiquitinated. Ubiquitinated by SH3RF2, leading to proteasome-mediated degradation.

The protein resides in the cytoplasm. The protein localises to the perinuclear region. Its subcellular location is the cell projection. It is found in the lamellipodium. It localises to the golgi apparatus. The protein resides in the trans-Golgi network. It carries out the reaction S-ubiquitinyl-[E2 ubiquitin-conjugating enzyme]-L-cysteine + [acceptor protein]-L-lysine = [E2 ubiquitin-conjugating enzyme]-L-cysteine + N(6)-ubiquitinyl-[acceptor protein]-L-lysine.. It participates in protein modification; protein ubiquitination. Its function is as follows. Has E3 ubiquitin-protein ligase activity. In the absence of an external substrate, it can catalyze self-ubiquitination. Acts as a scaffold protein that contributes to the effective activation of the JNK signaling pathway. The sequence is that of E3 ubiquitin-protein ligase SH3RF1 (sh3rf1) from Xenopus tropicalis (Western clawed frog).